Consider the following 1231-residue polypeptide: MSFFNFRKIFKLGSEKKKKQYEHVKRDLNPEEFWETIGELGDGAFGKVYKAQNKETNVLAAAKVIDTKSEEELEDYMVEIDILASCDHPNIVKLLDAFYYENNLWILIEFCAGGAVDAVMLELERPLTESQIQVVCKQTLEALNYLHDNKIIHRDLKAGNILFTLDGDIKLADFGVSAKNTRTIQRRDSFIGTPYWMAPEVVMCETSKDRPYDYKADVWSLGITLIEMAEIEPPHHELNPMRVLLKIAKSEPPTLAQPSRWSSNFKDFLKKCLEKNVDARWTTSQLLQHPFVTIDSNKPIRELIAEAKAEVTEEVEDGKEEDDDEEIENSLPIPTNKRASSDLSIASSEEDKLSQNACILESVSEKTEHNASGDKFSTKVLNEKPCPGEPENAVELVGGAVAVLPDRATELPESGREEKRPKLDRLPDTEDQEMADINSVSEGEEDHAVTSETNIEHNLKPEKERDQEKQPVLENKLVKSEDTTIQTVDLVSQETGEKEVDIHILDSEVVHAVEDTHEKLRKDDTTQKDVISDTSSVGERDEEIGAVPKTAESSAEGAQGDGGKETDEGAQILISKATEGPKASGTEEAPPVTEITETNDTDQKLVENTHEKQLPISSETTLDTSEGLGASEGREVTESGSTEEVEVEGAVSETDEEDVQSETRGAPMAVTQMDTEKNETPHEAPAQVEVQVPVPPQPSEPPPAPIPSININSEAAENKGEMGASLNTETILLPESESQKENDTDSGTGSTADNSSIDLNLSISSFLSKTKDNGSISLQETRRQKKTLKKTRKFIVDGVEVSVTTSKIVTDSDSKTEELRFLRRQELRELRFLQKEEQRAQQQLNGKLQQQREQIFRRFEQEMMSKKRQYDQEIENLEKQQKQTIERLEQEHTNRLRDEAKRIKGEQEKELSKFQNILKNRKKEVLNEVEKAPKDLRKELMKRRKEELAQSQHVQEQDFVQKQQQELDGSLKKIIQQQKAELANIERECLNNKQQLMRAREAAIWELEERHLQEKHQLLKQQLKDQYFMQRHQLLKRHEKETEQMQRYNQRLIEELKNRQTQERARLPKIQRSEAKTRMAMFKKSLRINSTATPDQDRDKIKQFSAQEEKRQKNERMAQHQKHENQMRDLQLQCEANVRELHQLQNEKCHLLVEHETQKLKELDEEHSQELKEWREKLRPRKKTLEEEFARKLQEQEVFFKMTGESECLNPSTQSRISKFYPIPSLHSTGS.

Residue S14 is modified to Phosphoserine. The region spanning 34 to 292 (WETIGELGDG…TSQLLQHPFV (259 aa)) is the Protein kinase domain. ATP-binding positions include 40 to 48 (LGDGAFGKV) and K63. Residue D155 is the Proton acceptor of the active site. Phosphothreonine is present on T183. S189 carries the post-translational modification Phosphoserine. Positions 309 to 351 (AEVTEEVEDGKEEDDDEEIENSLPIPTNKRASSDLSIASSEED) are disordered. The span at 312–328 (TEEVEDGKEEDDDEEIE) shows a compositional bias: acidic residues. Residues S330, S340, S341, S344, S347, S348, S354, and S372 each carry the phosphoserine modification. Positions 337 to 347 (KRASSDLSIAS) are enriched in polar residues. A disordered region spans residues 405–478 (PDRATELPES…KQPVLENKLV (74 aa)). 2 stretches are compositionally biased toward basic and acidic residues: residues 407–428 (RATE…RLPD) and 446–478 (DHAV…NKLV). Phosphoserine is present on S507. A compositionally biased stretch (basic and acidic residues) spans 516–531 (THEKLRKDDTTQKDVI). The tract at residues 516–757 (THEKLRKDDT…TGSTADNSSI (242 aa)) is disordered. Residues S536 and S554 each carry the phosphoserine modification. Positions 601 to 613 (TDQKLVENTHEKQ) are enriched in basic and acidic residues. The segment covering 615-624 (PISSETTLDT) has biased composition (polar residues). S641 and S661 each carry phosphoserine. Residues 641–660 (STEEVEVEGAVSETDEEDVQ) are compositionally biased toward acidic residues. The segment covering 683–692 (EAPAQVEVQV) has biased composition (low complexity). Positions 693–706 (PVPPQPSEPPPAPI) are enriched in pro residues. S775 is subject to Phosphoserine. T810 carries the phosphothreonine modification. S814 carries the post-translational modification Phosphoserine. Residues 822 to 1065 (LRRQELRELR…LKNRQTQERA (244 aa)) adopt a coiled-coil conformation. A UVR domain is found at 871–906 (DQEIENLEKQQKQTIERLEQEHTNRLRDEAKRIKGE). T1093 bears the Phosphothreonine mark. The stretch at 1105–1179 (SAQEEKRQKN…ELKEWREKLR (75 aa)) forms a coiled coil.

The protein belongs to the protein kinase superfamily. STE Ser/Thr protein kinase family. STE20 subfamily. Post-translationally, proteolytically cleaved by caspase-3. Autophosphorylated. As to expression, ubiquitously expressed.

The protein localises to the cytoplasm. The catalysed reaction is L-seryl-[protein] + ATP = O-phospho-L-seryl-[protein] + ADP + H(+). It catalyses the reaction L-threonyl-[protein] + ATP = O-phospho-L-threonyl-[protein] + ADP + H(+). Functionally, mediates apoptosis and actin stress fiber dissolution. This chain is STE20-like serine/threonine-protein kinase (SLK), found in Cavia porcellus (Guinea pig).